The chain runs to 178 residues: Cytidylate kinase (178 aa).

7-15 lines the ATP pocket; it reads GLPGTGTTT.

This sequence belongs to the cytidylate kinase family. Type 2 subfamily.

It is found in the cytoplasm. The catalysed reaction is CMP + ATP = CDP + ADP. It carries out the reaction dCMP + ATP = dCDP + ADP. The sequence is that of Cytidylate kinase from Methanococcus maripaludis (strain C7 / ATCC BAA-1331).